A 473-amino-acid polypeptide reads, in one-letter code: Dol-P-Glc:Glc(2)Man(9)GlcNAc(2)-PP-Dol alpha-1,2-glucosyltransferase (473 aa).

Residues 1-6 (MAQLEG) are Cytoplasmic-facing. Residues 7–27 (YYFSAALSCTFLVSCLLFSAF) traverse the membrane as a helical segment. The Extracellular segment spans residues 28-64 (SRALREPYMDEIFHLPQAQRYCEGHFSLSQWDPMITT). Residues 65–85 (LPGLYLVSIGVIKPAIWIFGW) form a helical membrane-spanning segment. The Cytoplasmic segment spans residues 86-97 (SEHVVCSIGMLR). Residues 98 to 118 (FVNLLFSVGNFYLLYLLFCKV) traverse the membrane as a helical segment. The Extracellular portion of the chain corresponds to 119–130 (QPRNKAASSIQR). Transmembrane regions (helical) follow at residues 131-151 (VLSTLTLAVFPTLYFFNFLYY) and 152-172 (TEAGSMFFTLFAYLMCLYGNH). The Extracellular segment spans residues 173 to 175 (KTS). The helical transmembrane segment at 176-196 (AFLGFCGFMFRQTNIIWAVFC) threads the bilayer. Topologically, residues 197–249 (AGNVIAQKLTEAWKTELQKKEDRLPPIKGPFAEFRKILQFLLAYSMSFKNLSM) are cytoplasmic. Residues 250–270 (LLLLTWPYILLGFLFCAFVVV) form a helical membrane-spanning segment. Residues 271 to 283 (NGGIVIGDRSSHE) lie on the Extracellular side of the membrane. The helical transmembrane segment at 284 to 304 (ACLHFPQLFYFFSFTLFFSFP) threads the bilayer. Residues 305–323 (HLLSPSKIKTFLSLVWKRR) are Cytoplasmic-facing. The chain crosses the membrane as a helical span at residues 324–344 (ILFFVVTLVSVFLVWKFTYAH). Over 345 to 367 (KYLLADNRHYTFYVWKRVFQRYE) the chain is Extracellular. Residues 368–388 (TVKYLLVPAYIFAGWSIADSL) traverse the membrane as a helical segment. Topologically, residues 389-392 (KSKS) are cytoplasmic. The chain crosses the membrane as a helical span at residues 393–413 (IFWNLMFFICLFTVIVPQKLL). Topologically, residues 414 to 436 (EFRYFILPYVIYRLNIPLPPTSR) are extracellular. Residues 437 to 457 (LICELSCYAVVNFITFFIFLN) form a helical membrane-spanning segment. Topologically, residues 458 to 473 (KTFQWPNSQDIQRFMW) are cytoplasmic.

It belongs to the ALG10 glucosyltransferase family.

The protein resides in the endoplasmic reticulum membrane. The catalysed reaction is an alpha-D-Glc-(1-&gt;3)-alpha-D-Glc-(1-&gt;3)-alpha-D-Man-(1-&gt;2)-alpha-D-Man-(1-&gt;2)-alpha-D-Man-(1-&gt;3)-[alpha-D-Man-(1-&gt;2)-alpha-D-Man-(1-&gt;3)-[alpha-D-Man-(1-&gt;2)-alpha-D-Man-(1-&gt;6)]-alpha-D-Man-(1-&gt;6)]-beta-D-Man-(1-&gt;4)-beta-D-GlcNAc-(1-&gt;4)-alpha-D-GlcNAc-diphospho-di-trans,poly-cis-dolichol + a di-trans,poly-cis-dolichyl beta-D-glucosyl phosphate = a alpha-D-Glc-(1-&gt;2)-alpha-D-Glc-(1-&gt;3)-alpha-D-Glc-(1-&gt;3)-alpha-D-Man-(1-&gt;2)-alpha-D-Man-(1-&gt;2)-alpha-D-Man-(1-&gt;3)-[alpha-D-Man-(1-&gt;2)-alpha-D-Man-(1-&gt;3)-[alpha-D-Man-(1-&gt;2)-alpha-D-Man-(1-&gt;6)]-alpha-D-Man-(1-&gt;6)]-beta-D-Man-(1-&gt;4)-beta-D-GlcNAc-(1-&gt;4)-alpha-D-GlcNAc-diphospho-di-trans,poly-cis-dolichol + a di-trans,poly-cis-dolichyl phosphate + H(+). The protein operates within protein modification; protein glycosylation. Dol-P-Glc:Glc(2)Man(9)GlcNAc(2)-PP-Dol alpha-1,2-glucosyltransferase that operates in the biosynthetic pathway of dolichol-linked oligosaccharides, the glycan precursors employed in protein asparagine (N)-glycosylation. The assembly of dolichol-linked oligosaccharides begins on the cytosolic side of the endoplasmic reticulum membrane and finishes in its lumen. The sequential addition of sugars to dolichol pyrophosphate produces dolichol-linked oligosaccharides containing fourteen sugars, including two GlcNAcs, nine mannoses and three glucoses. Once assembled, the oligosaccharide is transferred from the lipid to nascent proteins by oligosaccharyltransferases. In the lumen of the endoplasmic reticulum, adds the third and last glucose residue from dolichyl phosphate glucose (Dol-P-Glc) onto the lipid-linked oligosaccharide intermediate Glc(2)Man(9)GlcNAc(2)-PP-Dol to produce Glc(3)Man(9)GlcNAc(2)-PP-Dol. The protein is Dol-P-Glc:Glc(2)Man(9)GlcNAc(2)-PP-Dol alpha-1,2-glucosyltransferase of Homo sapiens (Human).